A 475-amino-acid chain; its full sequence is Rho GTPase-activating protein 15 (475 aa).

A disordered region spans residues 1 to 22 (MERSTTSDTASEKPNPSHSTGA). A PH domain is found at 80-190 (VVEKEGYLLK…WFHAIKNAID (111 aa)). The region spanning 281 to 470 (SHLHLVCEHE…LMLSEYSKIF (190 aa)) is the Rho-GAP domain.

The protein resides in the cytoplasm. It localises to the membrane. GTPase activator for the Rho-type GTPases by converting them to an inactive GDP-bound state. This is Rho GTPase-activating protein 15 (ARHGAP15) from Gallus gallus (Chicken).